A 274-amino-acid chain; its full sequence is Penicillin-insensitive murein endopeptidase (274 aa).

An N-terminal signal peptide occupies residues 1 to 19 (MKKTAIALLAWFVSSASLA). 3 cysteine pairs are disulfide-bonded: C44–C265, C187–C235, and C216–C223. Zn(2+) contacts are provided by H110, H113, D120, D147, H150, and H211. The disordered stretch occupies residues 225–274 (DQPLPPPGDGCGAELQSWFEPPKPGTTKPEKKTPPPLPPSCQALLDEHVL).

This sequence belongs to the peptidase M74 family. In terms of assembly, dimer. Zn(2+) serves as cofactor.

The protein localises to the periplasm. Murein endopeptidase that cleaves the D-alanyl-meso-2,6-diamino-pimelyl amide bond that connects peptidoglycan strands. Likely plays a role in the removal of murein from the sacculus. This Salmonella paratyphi A (strain AKU_12601) protein is Penicillin-insensitive murein endopeptidase.